The sequence spans 428 residues: GTPase Obg (428 aa).

The Obg domain maps to 1-158; sequence MFVDQTKIDV…RTLRLELKVL (158 aa). The 170-residue stretch at 159-328 folds into the OBG-type G domain; sequence ADVGLVGFPS…LMGKTADLVE (170 aa). Residues 165–172, 190–194, 212–215, 282–285, and 309–311 contribute to the GTP site; these read GFPSVGKS, FTTLT, DLPG, TQMD, and SSV. Residues S172 and T192 each contribute to the Mg(2+) site. In terms of domain architecture, OCT spans 350 to 428; sequence YKKPEDDGFK…IADFTFEFVD (79 aa).

The protein belongs to the TRAFAC class OBG-HflX-like GTPase superfamily. OBG GTPase family. As to quaternary structure, monomer. Mg(2+) serves as cofactor.

It is found in the cytoplasm. Functionally, an essential GTPase which binds GTP, GDP and possibly (p)ppGpp with moderate affinity, with high nucleotide exchange rates and a fairly low GTP hydrolysis rate. Plays a role in control of the cell cycle, stress response, ribosome biogenesis and in those bacteria that undergo differentiation, in morphogenesis control. The sequence is that of GTPase Obg from Lactobacillus gasseri (strain ATCC 33323 / DSM 20243 / BCRC 14619 / CIP 102991 / JCM 1131 / KCTC 3163 / NCIMB 11718 / NCTC 13722 / AM63).